The chain runs to 194 residues: Factor in the germline alpha (194 aa).

Residues 59–111 (ERRRVANAKERERIKNLNRGFAKLKALVPFLPQSRKPSKVDILKGATEYIQIL) enclose the bHLH domain. A compositionally biased stretch (basic and acidic residues) spans 121–137 (SEKQSPEEQTHSGRPSD). The segment at 121–163 (SEKQSPEEQTHSGRPSDPHVSSTRELLGNATQPTSCASGLKKE) is disordered. Positions 139–157 (HVSSTRELLGNATQPTSCA) are enriched in polar residues.

As to quaternary structure, heterodimer with TCF3/isoform E12. As to expression, expressed only in the oocytes within the ovary and at lower level in the testis. Found in the resting oocytes of the primordial follicle cells, at the periphery of the ovary and in the hilar region. Also detected in growing oocytes, but at lower levels.

It localises to the nucleus. Germ-line specific transcription factor implicated in postnatal oocyte-specific gene expression. Plays a key regulatory role in the expression of multiple oocyte-specific genes, including those that initiate folliculogenesis and those that encode the zona pellucida (ZP1, ZP2 and ZP3) required for fertilization and early embryonic survival. Essential for oocytes to survive and form primordial follicles. The persistence of FIGLA in adult females suggests that it may regulate additional pathways that are essential for normal ovarian development. Binds to the E-box (5'-CANNTG-3') of the ZPs (ZP1, ZP2, ZP3) promoters. In Mus musculus (Mouse), this protein is Factor in the germline alpha (Figla).